Consider the following 603-residue polypeptide: Geraniol synthase Tps-5073G30, chloroplastic (603 aa).

The transit peptide at 1–35 (MCSISQKVVIGLNKAAANNNLQNLDRRGFKTRCVS) directs the protein to the chloroplast. Residues arginine 319, aspartate 356, aspartate 360, arginine 497, and aspartate 500 each contribute to the (2E)-geranyl diphosphate site. Residues aspartate 356 and aspartate 360 each contribute to the Mg(2+) site. The DDXXD motif signature appears at 356–360 (DDVYD). 3 residues coordinate Mg(2+): aspartate 500, threonine 504, and glutamate 508.

The protein belongs to the terpene synthase family. Tpsb subfamily. In terms of assembly, monomer. Mg(2+) serves as cofactor. It depends on Mn(2+) as a cofactor.

It is found in the plastid. Its subcellular location is the chloroplast. The enzyme catalyses (2E)-geranyl diphosphate + H2O = (2E)-geraniol + diphosphate. It functions in the pathway secondary metabolite biosynthesis; terpenoid biosynthesis. Functionally, monoterpene synthase (mono-TPS) involved in the biosynthesis of monoterpenes natural products. Catalyzes the conversion of (2E)-geranyl diphosphate (GPP) into geraniol. The chain is Geraniol synthase Tps-5073G30, chloroplastic from Perilla frutescens (Beefsteak mint).